The sequence spans 409 residues: Immediate early response gene 5-like protein (409 aa).

Disordered stretches follow at residues 168 to 237 (QPPH…PSSS) and 312 to 335 (GQEEEDDEEEDAGDLGAEPPGGTP). Over residues 184-195 (QPGPAPLPPPAP) the composition is skewed to pro residues. 2 stretches are compositionally biased toward low complexity: residues 196–212 (AALCPRDPRVPAACSAP) and 220–237 (PPTVAASSPPASPAPSSS). Residues 313–324 (QEEEDDEEEDAG) show a composition bias toward acidic residues.

Belongs to the IER family.

This chain is Immediate early response gene 5-like protein (Ier5l), found in Rattus norvegicus (Rat).